Consider the following 299-residue polypeptide: Bifunctional protein FolD (299 aa).

NADP(+) contacts are provided by residues 179 to 181 (GPG) and Ile245.

The protein belongs to the tetrahydrofolate dehydrogenase/cyclohydrolase family. In terms of assembly, homodimer.

The enzyme catalyses (6R)-5,10-methylene-5,6,7,8-tetrahydrofolate + NADP(+) = (6R)-5,10-methenyltetrahydrofolate + NADPH. The catalysed reaction is (6R)-5,10-methenyltetrahydrofolate + H2O = (6R)-10-formyltetrahydrofolate + H(+). It participates in one-carbon metabolism; tetrahydrofolate interconversion. Its function is as follows. Catalyzes the oxidation of 5,10-methylenetetrahydrofolate to 5,10-methenyltetrahydrofolate and then the hydrolysis of 5,10-methenyltetrahydrofolate to 10-formyltetrahydrofolate. The protein is Bifunctional protein FolD of Deinococcus radiodurans (strain ATCC 13939 / DSM 20539 / JCM 16871 / CCUG 27074 / LMG 4051 / NBRC 15346 / NCIMB 9279 / VKM B-1422 / R1).